Here is a 676-residue protein sequence, read N- to C-terminus: Pentatricopeptide repeat-containing protein ATP4 homolog, chloroplastic (676 aa).

The transit peptide at 1 to 73 (MASPSSLLSW…NSPRAAGLAR (73 aa)) directs the protein to the chloroplast. Positions 17-58 (LSFQPKNPSPSPATARVSVQDPPPPPSDANPSPGRSSNTSRY) are disordered. 10 PPR repeats span residues 148–182 (EVIL…GVQP), 183–217 (DNAT…GCSP), 218–252 (DMLT…KWQL), 253–287 (DPVI…GVKP), 288–322 (NLVV…EAVP), 323–353 (NKAT…MKDE), 358–388 (DVVL…MKAS), 396–430 (DSWS…GFKP), 431–465 (NIFI…GITP), and 532–566 (RMPY…GIYS). The 85-residue stretch at 578–662 (LHLRGLSVGA…WFLTTSVAAR (85 aa)) folds into the Smr domain.

It belongs to the PPR family. P subfamily.

It is found in the plastid. The protein resides in the chloroplast. Involved in translation and accumulation of chloroplast ATP synthase subunits. The protein is Pentatricopeptide repeat-containing protein ATP4 homolog, chloroplastic of Oryza sativa subsp. japonica (Rice).